The primary structure comprises 511 residues: Bifunctional purine biosynthesis protein PurH (511 aa).

The region spanning 1–145 (MKKRALVSVS…KNHKFVSVIV (145 aa)) is the MGS-like domain.

Belongs to the PurH family.

It carries out the reaction (6R)-10-formyltetrahydrofolate + 5-amino-1-(5-phospho-beta-D-ribosyl)imidazole-4-carboxamide = 5-formamido-1-(5-phospho-D-ribosyl)imidazole-4-carboxamide + (6S)-5,6,7,8-tetrahydrofolate. The catalysed reaction is IMP + H2O = 5-formamido-1-(5-phospho-D-ribosyl)imidazole-4-carboxamide. It participates in purine metabolism; IMP biosynthesis via de novo pathway; 5-formamido-1-(5-phospho-D-ribosyl)imidazole-4-carboxamide from 5-amino-1-(5-phospho-D-ribosyl)imidazole-4-carboxamide (10-formyl THF route): step 1/1. It functions in the pathway purine metabolism; IMP biosynthesis via de novo pathway; IMP from 5-formamido-1-(5-phospho-D-ribosyl)imidazole-4-carboxamide: step 1/1. The polypeptide is Bifunctional purine biosynthesis protein PurH (Bacillus cereus (strain Q1)).